A 37-amino-acid polypeptide reads, in one-letter code: Cytochrome b6-f complex subunit 5 (37 aa).

Residues 5–25 form a helical membrane-spanning segment; the sequence is LLSGIVLGLIVVTLSGLFYAA.

Belongs to the PetG family. The 4 large subunits of the cytochrome b6-f complex are cytochrome b6, subunit IV (17 kDa polypeptide, PetD), cytochrome f and the Rieske protein, while the 4 small subunits are PetG, PetL, PetM and PetN. The complex functions as a dimer.

It is found in the cellular thylakoid membrane. Functionally, component of the cytochrome b6-f complex, which mediates electron transfer between photosystem II (PSII) and photosystem I (PSI), cyclic electron flow around PSI, and state transitions. PetG is required for either the stability or assembly of the cytochrome b6-f complex. The chain is Cytochrome b6-f complex subunit 5 from Trichormus variabilis (strain ATCC 29413 / PCC 7937) (Anabaena variabilis).